The following is a 513-amino-acid chain: t-SNARE domain-containing protein 1 (513 aa).

2 disordered regions span residues methionine 1 to arginine 23 and glutamate 49 to phenylalanine 128. Residues alanine 7 to glycine 19 show a composition bias toward gly residues. The residue at position 378 (serine 378) is a Phosphoserine. The region spanning leucine 416 to alanine 478 is the t-SNARE coiled-coil homology domain. The chain crosses the membrane as a helical span at residues cysteine 491–valine 511.

It is found in the membrane. This chain is t-SNARE domain-containing protein 1 (TSNARE1), found in Homo sapiens (Human).